A 549-amino-acid polypeptide reads, in one-letter code: Glucose-6-phosphate isomerase (549 aa).

Glu-355 functions as the Proton donor in the catalytic mechanism. Active-site residues include His-386 and Lys-514.

This sequence belongs to the GPI family.

The protein resides in the cytoplasm. It carries out the reaction alpha-D-glucose 6-phosphate = beta-D-fructose 6-phosphate. It functions in the pathway carbohydrate biosynthesis; gluconeogenesis. The protein operates within carbohydrate degradation; glycolysis; D-glyceraldehyde 3-phosphate and glycerone phosphate from D-glucose: step 2/4. Its function is as follows. Catalyzes the reversible isomerization of glucose-6-phosphate to fructose-6-phosphate. This chain is Glucose-6-phosphate isomerase, found in Salmonella paratyphi C (strain RKS4594).